The primary structure comprises 607 residues: Pogo transposable element with KRAB domain (607 aa).

The stretch at 8–29 (LNLTLKEEQKEEEVEIQELEDG) forms a coiled coil. K13 is covalently cross-linked (Glycyl lysine isopeptide (Lys-Gly) (interchain with G-Cter in SUMO2)). The KRAB domain occupies 47 to 118 (ALFDEVAIYF…DEWRLQGVTF (72 aa)). The HTH CENPB-type domain occupies 250–323 (AFRGPKNGRF…MRRYDLSLRH (74 aa)). A DDE-1 domain is found at 355–567 (YEVAQMGNAD…ISSESIVQGF (213 aa)). Residue K384 forms a Glycyl lysine isopeptide (Lys-Gly) (interchain with G-Cter in SUMO2) linkage. The disordered stretch occupies residues 588 to 607 (GELPKEPPKECGPESVAEGD). Positions 589–599 (ELPKEPPKECG) are enriched in basic and acidic residues.

The protein localises to the nucleus. The sequence is that of Pogo transposable element with KRAB domain (Pogk) from Mus musculus (Mouse).